Consider the following 284-residue polypeptide: Type II methyltransferase M1.LlaDCHI (284 aa).

S-adenosyl-L-methionine is bound by residues tryptophan 17, lysine 21, aspartate 62, and aspartate 194.

Belongs to the N(4)/N(6)-methyltransferase family.

It carries out the reaction a 2'-deoxyadenosine in DNA + S-adenosyl-L-methionine = an N(6)-methyl-2'-deoxyadenosine in DNA + S-adenosyl-L-homocysteine + H(+). An alpha subtype methylase, recognizes the double-stranded sequence 5'-GATC-3', methylates A-2 on both strands, and protects the DNA from cleavage by the LlaDCHI endonuclease. This chain is Type II methyltransferase M1.LlaDCHI, found in Lactococcus lactis subsp. cremoris (Streptococcus cremoris).